Consider the following 507-residue polypeptide: Variant surface glycoprotein ILTAT 1.25 (507 aa).

The first 21 residues, 1-21, serve as a signal peptide directing secretion; sequence MQSQQQPVFISIILLAINTDA. The segment covering 83–95 has biased composition (basic and acidic residues); it reads EPEAAPKESRSDE. The interval 83–102 is disordered; sequence EPEAAPKESRSDETPEACKA. N-linked (GlcNAc...) asparagine glycans are attached at residues N141 and N371. Residues 384–395 show a composition bias toward low complexity; that stretch reads PTKQPPAKAAAA. The interval 384 to 474 is disordered; that stretch reads PTKQPPAKAA…KKEEECKSPN (91 aa). Residues 396–420 show a composition bias toward basic and acidic residues; sequence PEKKSNPQKDCNKNTKKRDCKEGDG. Positions 444–455 are enriched in low complexity; that stretch reads SAAGAGDAGASD. The span at 456–474 shows a compositional bias: basic and acidic residues; sequence TEAKKCSDKKKEEECKSPN. Residue D484 is the site of GPI-anchor amidated aspartate attachment. A propeptide spans 485-507 (removed in mature form); it reads SSILANKQFALSVASAAFVALLF.

It is found in the cell membrane. VSG forms a coat on the surface of the parasite. The trypanosome evades the immune response of the host by expressing a series of antigenically distinct VSGs from an estimated 1000 VSG genes. The polypeptide is Variant surface glycoprotein ILTAT 1.25 (Trypanosoma brucei brucei).